The following is a 73-amino-acid chain: Sec-independent protein translocase protein TatA (73 aa).

Residues 1–21 (MGSFSIWHWLIVLVIVMLVFG) form a helical membrane-spanning segment. The disordered stretch occupies residues 50 to 73 (KEQIQQSSATAEKTVDVQAKDVNK). A compositionally biased stretch (basic and acidic residues) spans 62–73 (KTVDVQAKDVNK).

Belongs to the TatA/E family. The Tat system comprises two distinct complexes: a TatABC complex, containing multiple copies of TatA, TatB and TatC subunits, and a separate TatA complex, containing only TatA subunits. Substrates initially bind to the TatABC complex, which probably triggers association of the separate TatA complex to form the active translocon.

Its subcellular location is the cell inner membrane. Part of the twin-arginine translocation (Tat) system that transports large folded proteins containing a characteristic twin-arginine motif in their signal peptide across membranes. TatA could form the protein-conducting channel of the Tat system. The sequence is that of Sec-independent protein translocase protein TatA from Polynucleobacter necessarius subsp. necessarius (strain STIR1).